We begin with the raw amino-acid sequence, 405 residues long: Acetate kinase (405 aa).

Mg(2+) is bound at residue Asn-7. Lys-14 provides a ligand contact to ATP. Residue Arg-98 participates in substrate binding. Catalysis depends on Asp-156, which acts as the Proton donor/acceptor. ATP-binding positions include His-215–Gly-219, Asp-290–Arg-292, and Gly-338–Asn-342. Glu-391 contacts Mg(2+).

It belongs to the acetokinase family. Homodimer. Requires Mg(2+) as cofactor. It depends on Mn(2+) as a cofactor.

Its subcellular location is the cytoplasm. The enzyme catalyses acetate + ATP = acetyl phosphate + ADP. Its pathway is metabolic intermediate biosynthesis; acetyl-CoA biosynthesis; acetyl-CoA from acetate: step 1/2. Catalyzes the formation of acetyl phosphate from acetate and ATP. Can also catalyze the reverse reaction. The sequence is that of Acetate kinase from Gloeobacter violaceus (strain ATCC 29082 / PCC 7421).